The sequence spans 207 residues: ATP synthase subunit b 2 (207 aa).

Residues 53–72 form a helical membrane-spanning segment; the sequence is TYASQLLWLVITFGVFYLLM.

The protein belongs to the ATPase B chain family. F-type ATPases have 2 components, F(1) - the catalytic core - and F(0) - the membrane proton channel. F(1) has five subunits: alpha(3), beta(3), gamma(1), delta(1), epsilon(1). F(0) has three main subunits: a(1), b(2) and c(10-14). The alpha and beta chains form an alternating ring which encloses part of the gamma chain. F(1) is attached to F(0) by a central stalk formed by the gamma and epsilon chains, while a peripheral stalk is formed by the delta and b chains.

Its subcellular location is the cell inner membrane. Functionally, f(1)F(0) ATP synthase produces ATP from ADP in the presence of a proton or sodium gradient. F-type ATPases consist of two structural domains, F(1) containing the extramembraneous catalytic core and F(0) containing the membrane proton channel, linked together by a central stalk and a peripheral stalk. During catalysis, ATP synthesis in the catalytic domain of F(1) is coupled via a rotary mechanism of the central stalk subunits to proton translocation. Its function is as follows. Component of the F(0) channel, it forms part of the peripheral stalk, linking F(1) to F(0). The b'-subunit is a diverged and duplicated form of b found in plants and photosynthetic bacteria. The sequence is that of ATP synthase subunit b 2 (atpF2) from Rhizobium etli (strain ATCC 51251 / DSM 11541 / JCM 21823 / NBRC 15573 / CFN 42).